Consider the following 494-residue polypeptide: MGFWGRNSFEADKKHILVTGGSQGLGKAIAKELVLRGANVTIVARTVTKLQEAVAELSDSKIHEDQQVSFESVDLTSYESVHSMIERLPFCPDHVVHCAGSCIPGFFTELDPSVFEKQMRQNYLASVYVCHAAIRRMKEISPSYSRRILLVGSLLSSLPIIGYSAYSPVKAAVRNLADSLRQECILYDIEVSVYLPSTILSPGYEQENTLKPELVLQMEGMDSVQTCEEAASHCMTGLDRGDFLIANESTGHLMKNHCRNSSPHDNPILEYLFALVSLLAWPFYRRKLDSLVYQYALEKGYRQPSSSRNSWIFTLLLTFTQLTIFYLSLNCLIENPYRMLRNTFPIWFIMQTLQIYIQSPRPPLTPKRLLAGAASMLIGSLLISFILVAFGAPLLHDFHLTYFCALTLSVFTVYPLASTLAFNTEQWQRFLTLKSFNVIGSMQLRSWGPIIGAWFGAFPIPLDWDRPWQAWPITIVIGAFLGYAFAAIVGEILQ.

NADPH contacts are provided by Gly-20, Ser-22, and Gly-24. Positions 20-24 (GGSQG) match the GXSXG motif. Residue Leu-25 coordinates NADP(+). 2 residues coordinate NADPH: Arg-45 and Lys-49. Val-54 provides a ligand contact to NADP(+). 2 residues coordinate NADPH: Asp-74 and Leu-75. The helical transmembrane segment at 148–168 (ILLVGSLLSSLPIIGYSAYSP) threads the bilayer. 3 residues coordinate NADP(+): Tyr-166, Lys-170, and Ile-199. Catalysis depends on Tyr-166, which acts as the Proton acceptor. The Lowers pKa of active site Tyr role is filled by Lys-170. 6 consecutive transmembrane segments (helical) span residues 264 to 284 (HDNP…WPFY), 312 to 332 (IFTL…LNCL), 370 to 390 (LAGA…LVAF), 402 to 422 (YFCA…TLAF), 444 to 464 (LRSW…PLDW), and 473 to 493 (ITIV…GEIL).

It in the N-terminal section; belongs to the short-chain dehydrogenases/reductases (SDR) family. The protein in the C-terminal section; belongs to the PIGF family.

It is found in the endoplasmic reticulum membrane. The enzyme catalyses sphinganine + NADP(+) = 3-oxosphinganine + NADPH + H(+). It participates in glycolipid biosynthesis; glycosylphosphatidylinositol-anchor biosynthesis. It functions in the pathway lipid metabolism; sphingolipid metabolism. Its function is as follows. Acts in the GPI biosynthetic pathway between GlcNAc-PI synthesis and GPI transfer to protein. Required for the formation of complete GPI precursors CP1 and CP2. Catalyzes the reduction of 3'-oxosphinganine (3-ketodihydrosphingosine/KDS) to sphinganine (dihydrosphingosine/DHS), the second step of de novo sphingolipid biosynthesis. This chain is PIGF/3-ketodihydrosphingosine reductase fusion protein, found in Schizosaccharomyces pombe (strain 972 / ATCC 24843) (Fission yeast).